The primary structure comprises 316 residues: Ribosomal RNA small subunit methyltransferase H (316 aa).

Residues 35–37, aspartate 55, phenylalanine 84, aspartate 105, and glutamine 112 each bind S-adenosyl-L-methionine; that span reads SGH.

Belongs to the methyltransferase superfamily. RsmH family.

It is found in the cytoplasm. The catalysed reaction is cytidine(1402) in 16S rRNA + S-adenosyl-L-methionine = N(4)-methylcytidine(1402) in 16S rRNA + S-adenosyl-L-homocysteine + H(+). Its function is as follows. Specifically methylates the N4 position of cytidine in position 1402 (C1402) of 16S rRNA. The chain is Ribosomal RNA small subunit methyltransferase H from Streptococcus pyogenes serotype M18 (strain MGAS8232).